Here is a 135-residue protein sequence, read N- to C-terminus: Lymphocyte antigen 6 complex locus protein G6d (135 aa).

Residues 1–19 (MNSQLVGILLSALLGVALG) form the signal peptide. Residues 22-121 (TRCYDCGGGP…ASSVTPLCIL (100 aa)) form the UPAR/Ly6 domain. 5 disulfides stabilise this stretch: Cys-24–Cys-48, Cys-27–Cys-35, Cys-42–Cys-76, Cys-82–Cys-101, and Cys-102–Cys-107. Residue Thr-68 is glycosylated (O-linked (GalNAc...) threonine). Residue Asn-108 is the site of GPI-anchor amidated asparagine attachment. A propeptide spans 109–135 (SAVASSVTPLCILAAAVTTLAWLLPGL) (removed in mature form).

Homodimer. O-glycosylated. Expressed in embryonic tissue and adult lung, kidney, brain, liver and spleen.

The protein localises to the cell membrane. The protein resides in the cell projection. It localises to the filopodium. The chain is Lymphocyte antigen 6 complex locus protein G6d (Ly6g6d) from Mus musculus (Mouse).